A 494-amino-acid chain; its full sequence is Ribosomal lysine N-methyltransferase 4 (494 aa).

In terms of domain architecture, SET spans 25–265 (PKIEIKDLCC…KNEQVYNIYG (241 aa)). Tyr-264 provides a ligand contact to S-adenosyl-L-methionine.

The protein belongs to the class V-like SAM-binding methyltransferase superfamily. Histone-lysine methyltransferase family. SETD6 subfamily.

It is found in the nucleus. Its function is as follows. S-adenosyl-L-methionine-dependent protein-lysine N-methyltransferase that monomethylates 60S ribosomal protein L42 (RPL42A and RPL42B) at 'Lys-55'. The sequence is that of Ribosomal lysine N-methyltransferase 4 from Saccharomyces cerevisiae (strain ATCC 204508 / S288c) (Baker's yeast).